Consider the following 142-residue polypeptide: Large ribosomal subunit protein uL13 (142 aa).

The protein belongs to the universal ribosomal protein uL13 family. In terms of assembly, part of the 50S ribosomal subunit.

Its function is as follows. This protein is one of the early assembly proteins of the 50S ribosomal subunit, although it is not seen to bind rRNA by itself. It is important during the early stages of 50S assembly. The protein is Large ribosomal subunit protein uL13 of Laribacter hongkongensis (strain HLHK9).